The sequence spans 287 residues: Probable glucose uptake protein GlcU (287 aa).

9 helical membrane passes run 7–29 (LIALLPALFWGSVVIINVFVGGG), 34–56 (IRGTTLGTLFIGFSLLATGHAAF), 58–75 (NLTVIIVGLVSGALWAFG), 114–136 (WSTIVQVVMGLIAMILLVVGISL), 156–178 (MGILLLSTIGYVGYVVLGDIFGV), 183–202 (ALFFQSIGMAIGGLILSMNH), 209–228 (TALNLIPGVIWGIGNLFMFY), 233–255 (VGVATSFSLSQLLVIVSTLGGIF), and 267–286 (IGIWSGIIVIVIASIILGNL).

This sequence belongs to the GRP transporter (TC 2.A.7.5) family.

The protein resides in the cell membrane. Its function is as follows. Involved in the uptake of glucose. This is Probable glucose uptake protein GlcU (glcU) from Staphylococcus epidermidis (strain ATCC 35984 / DSM 28319 / BCRC 17069 / CCUG 31568 / BM 3577 / RP62A).